Reading from the N-terminus, the 252-residue chain is tRNA (guanine-N(1)-)-methyltransferase (252 aa).

S-adenosyl-L-methionine contacts are provided by residues Gly-117 and 137-142 (IGDYVL).

Belongs to the RNA methyltransferase TrmD family. As to quaternary structure, homodimer.

It localises to the cytoplasm. It carries out the reaction guanosine(37) in tRNA + S-adenosyl-L-methionine = N(1)-methylguanosine(37) in tRNA + S-adenosyl-L-homocysteine + H(+). Functionally, specifically methylates guanosine-37 in various tRNAs. This is tRNA (guanine-N(1)-)-methyltransferase from Idiomarina loihiensis (strain ATCC BAA-735 / DSM 15497 / L2-TR).